The following is a 122-amino-acid chain: Large ribosomal subunit protein uL14c (122 aa).

The protein belongs to the universal ribosomal protein uL14 family. As to quaternary structure, part of the 50S ribosomal subunit.

Its subcellular location is the plastid. It is found in the chloroplast. In terms of biological role, binds to 23S rRNA. The chain is Large ribosomal subunit protein uL14c from Adiantum capillus-veneris (Maidenhair fern).